A 599-amino-acid chain; its full sequence is Sulfite reductase [NADPH] flavoprotein alpha-component (599 aa).

A Flavodoxin-like domain is found at 64–202; the sequence is ITIISASQTG…AASEWRARVV (139 aa). Residues 70-75, 117-120, and 153-162 contribute to the FMN site; these read SQTGNA, STQG, and LGDSSYEFFC. Positions 234-448 constitute an FAD-binding FR-type domain; that stretch reads DAPLAASLSV…IEHNDNFRLP (215 aa). Residues Thr322, Ala356, 386-389, 404-406, Tyr410, and 419-422 each bind FAD; these read RLYS, TVG, and GGAS. Residues 519 to 520, 525 to 529, and Asp561 each bind NADP(+); these read SR and KIYVQ. Tyr599 is a binding site for FAD.

The protein belongs to the NADPH-dependent sulphite reductase flavoprotein subunit CysJ family. In the N-terminal section; belongs to the flavodoxin family. It in the C-terminal section; belongs to the flavoprotein pyridine nucleotide cytochrome reductase family. As to quaternary structure, alpha(8)-beta(8). The alpha component is a flavoprotein, the beta component is a hemoprotein. It depends on FAD as a cofactor. FMN is required as a cofactor.

It catalyses the reaction hydrogen sulfide + 3 NADP(+) + 3 H2O = sulfite + 3 NADPH + 4 H(+). It functions in the pathway sulfur metabolism; hydrogen sulfide biosynthesis; hydrogen sulfide from sulfite (NADPH route): step 1/1. In terms of biological role, component of the sulfite reductase complex that catalyzes the 6-electron reduction of sulfite to sulfide. This is one of several activities required for the biosynthesis of L-cysteine from sulfate. The flavoprotein component catalyzes the electron flow from NADPH -&gt; FAD -&gt; FMN to the hemoprotein component. The chain is Sulfite reductase [NADPH] flavoprotein alpha-component from Escherichia coli O6:H1 (strain CFT073 / ATCC 700928 / UPEC).